Here is a 1360-residue protein sequence, read N- to C-terminus: TRAF2 and NCK-interacting protein kinase (1360 aa).

The 265-residue stretch at 25 to 289 (FELVELVGNG…TEQLMKHPFI (265 aa)) folds into the Protein kinase domain. Residues 31–39 (VGNGTYGQV) and K54 contribute to the ATP site. Catalysis depends on D153, which acts as the Proton acceptor. T187 bears the Phosphothreonine mark. Disordered regions lie at residues 284 to 347 (MKHP…LPGE), 398 to 440 (QKEQ…RRRA), and 539 to 589 (ERSR…RPVD). Basic and acidic residues predominate over residues 288-307 (FIRDQPNERQVRIQLKDHID). The interval 290-1047 (RDQPNERQVR…EIRKYKKRFN (758 aa)) is mediates interaction with NEDD4. Residues 317-335 (DETEYEYSGSEEEEEENDS) are compositionally biased toward acidic residues. A phosphoserine mark is found at S324 and S326. A phosphoserine mark is found at S560 and S570. The residue at position 581 (T581) is a Phosphothreonine. A phosphoserine mark is found at S600, S608, S610, and S640. Disordered stretches follow at residues 601–801 (QGPA…KAID), 814–878 (LRIE…YNVG), 908–927 (TSGE…AGHI), and 933–998 (VQQS…ESSA). The span at 652–669 (RIEKFDRSSWLRQEEDIP) shows a compositional bias: basic and acidic residues. S678, S680, S688, S701, S707, S720, S764, S766, and S769 each carry phosphoserine. The span at 720-755 (SPLQRTSSGSSSSSSTPSSQPSSQGGSQPGSQAGSS) shows a compositional bias: low complexity. 2 stretches are compositionally biased toward basic and acidic residues: residues 775-789 (EPAK…DITR) and 814-827 (LRIE…KKVT). The segment covering 834-847 (EESESSEEEEEDGE) has biased composition (acidic residues). Residues 908–917 (TSGEKKRSGH) are compositionally biased toward basic and acidic residues. At S959 the chain carries Phosphoserine. Residues 987–996 (TDEDEEDEES) show a composition bias toward acidic residues. The CNH domain maps to 1047-1334 (NSEILCAALW…KFLCERNDKV (288 aa)).

It belongs to the protein kinase superfamily. STE Ser/Thr protein kinase family. STE20 subfamily. In terms of assembly, interacts (via the CNH domain) with RAP2A (GTP-bound form preferentially); the interaction is direct and required for the activation of TNIK by RAP2A. Interacts with NEDD4; recruits RAP2A to NEDD4. Interacts with TRAF2 and NCK. Interacts with TCF7L2/TCF4 and CTNNB1; the interaction is direct. Interacts with TANC1. Autophosphorylated. Autophosphorylation is activated by RAP2A and induces association to the cytoskeletal fraction. In terms of tissue distribution, expressed ubiquitously. Highest levels observed in heart, brain and skeletal muscle. Expressed in normal colonic epithelia and colorectal cancer tissues.

It is found in the nucleus. Its subcellular location is the cytoplasm. It localises to the recycling endosome. The protein resides in the cytoskeleton. The enzyme catalyses L-seryl-[protein] + ATP = O-phospho-L-seryl-[protein] + ADP + H(+). It carries out the reaction L-threonyl-[protein] + ATP = O-phospho-L-threonyl-[protein] + ADP + H(+). Functionally, serine/threonine kinase that acts as an essential activator of the Wnt signaling pathway. Recruited to promoters of Wnt target genes and required to activate their expression. May act by phosphorylating TCF4/TCF7L2. Appears to act upstream of the JUN N-terminal pathway. May play a role in the response to environmental stress. Part of a signaling complex composed of NEDD4, RAP2A and TNIK which regulates neuronal dendrite extension and arborization during development. More generally, it may play a role in cytoskeletal rearrangements and regulate cell spreading. Phosphorylates SMAD1 on Thr-322. Activator of the Hippo signaling pathway which plays a pivotal role in organ size control and tumor suppression by restricting proliferation and promoting apoptosis. MAP4Ks act in parallel to and are partially redundant with STK3/MST2 and STK4/MST2 in the phosphorylation and activation of LATS1/2, and establish MAP4Ks as components of the expanded Hippo pathway. This chain is TRAF2 and NCK-interacting protein kinase, found in Homo sapiens (Human).